The chain runs to 345 residues: Ubiquitin-associated domain-containing protein 2 (345 aa).

A signal peptide spans 1 to 39 (MFTSTGSSGLYKAPLSKSLLLVPSALSLLLTLLLPHCQK). Residues 40–91 (FFVYDLHAVKHDLQIWRLICGRIICLDLKDAFCSGLLIYNFRIFERRYGSRK) lie on the Extracellular side of the membrane. The chain crosses the membrane as a helical span at residues 92 to 112 (FASFLLGSWVLSALFDFILVE). The Cytoplasmic segment spans residues 113 to 125 (AVQYSLGVTVASN). A helical membrane pass occupies residues 126–146 (LPSGFLAPVFALFVPFHCSIP). Residues 147–163 (RVQVAQILGPLSITNKT) are Extracellular-facing. The N-linked (GlcNAc...) asparagine glycan is linked to Asn161. Residues 164–184 (LIYILGLQLFTSGSYIWIVAM) traverse the membrane as a helical segment. The Cytoplasmic segment spans residues 185 to 345 (SGLISGMCYD…NVATNFLLQH (161 aa)). Residues 287–306 (NINYQDGPRSEQRASPPLEV) are disordered. One can recognise a UBA domain in the interval 305–345 (EVSEEQVARLMEMGFSRGDALEALRASNNDLNVATNFLLQH).

Interacts with LMBR1L, FAF2, AMFR and VCP.

It localises to the endoplasmic reticulum membrane. Functionally, restricts trafficking of FAF2 from the endoplasmic reticulum to lipid droplets. In association with LMBR1L and E3 ubiquitin-protein ligase AMFR, negatively regulates the canonical Wnt signaling pathway in the lymphocytes by promoting the ubiquitin-mediated degradation of CTNNB1 and Wnt receptors FZD6 and LRP6. The sequence is that of Ubiquitin-associated domain-containing protein 2 (Ubac2) from Mus musculus (Mouse).